Here is a 190-residue protein sequence, read N- to C-terminus: Protein GrpE (190 aa).

Positions 21–49 (DDLQEEVEATETEETVEEVIEETPEKSEL) are disordered. The span at 23 to 42 (LQEEVEATETEETVEEVIEE) shows a compositional bias: acidic residues.

The protein belongs to the GrpE family. Homodimer.

It is found in the cytoplasm. In terms of biological role, participates actively in the response to hyperosmotic and heat shock by preventing the aggregation of stress-denatured proteins, in association with DnaK and GrpE. It is the nucleotide exchange factor for DnaK and may function as a thermosensor. Unfolded proteins bind initially to DnaJ; upon interaction with the DnaJ-bound protein, DnaK hydrolyzes its bound ATP, resulting in the formation of a stable complex. GrpE releases ADP from DnaK; ATP binding to DnaK triggers the release of the substrate protein, thus completing the reaction cycle. Several rounds of ATP-dependent interactions between DnaJ, DnaK and GrpE are required for fully efficient folding. The polypeptide is Protein GrpE (Streptococcus pyogenes serotype M3 (strain SSI-1)).